The following is a 271-amino-acid chain: Large ribosomal subunit protein eL8 (271 aa).

It belongs to the eukaryotic ribosomal protein eL8 family.

This Drosophila melanogaster (Fruit fly) protein is Large ribosomal subunit protein eL8 (RpL7A).